Here is a 976-residue protein sequence, read N- to C-terminus: Protein phosphatase 1 regulatory subunit 12B (976 aa).

The segment covering 1–24 (MAELEHLGGKRAESARARRAEQLR) has biased composition (basic and acidic residues). A disordered region spans residues 1–52 (MAELEHLGGKRAESARARRAEQLRRWRGSLTEQEPAERQGAGRQLQTRRGSP). Residue S29 is modified to Phosphoserine. ANK repeat units follow at residues 57–86 (EDGA…DINT), 90–119 (DGLT…NVNQ), 123–152 (EGWT…SVGI), 216–245 (SGAT…ELNV), and 249–278 (DGWT…DMDI). The interval 342 to 489 (EEIPKSQDTE…LDDKDKEREN (148 aa)) is disordered. Positions 362 to 374 (SEEEEGEDEVSES) are enriched in acidic residues. The span at 375–385 (ETEKEADKKPE) shows a compositional bias: basic and acidic residues. The span at 411 to 423 (FSASSARRLSSLF) shows a compositional bias: low complexity. The residue at position 444 (T444) is a Phosphothreonine. Over residues 465–477 (SSIYRSSSSPRIS) the composition is skewed to low complexity. The span at 480–489 (LDDKDKEREN) shows a compositional bias: basic and acidic residues. S502 carries the phosphoserine modification. A disordered region spans residues 503–873 (STSDIEEKEN…LTSRVEEDSN (371 aa)). Residues 538–564 (ETPQTIAPSTYTSTYLKRTPYKSQADS) are compositionally biased toward polar residues. The segment covering 622 to 631 (VRDEEAESLR) has biased composition (basic and acidic residues). Positions 632–642 (KARSRQARQTR) are enriched in basic residues. T645 carries the post-translational modification Phosphothreonine. A compositionally biased stretch (basic and acidic residues) spans 655 to 679 (EAEKTFSRSRAERQAQEQPGEKLED). Composition is skewed to polar residues over residues 722-739 (DKPT…SLYT) and 747-763 (SRAS…STHA). Residues 765–777 (AAKEMDTSEKGEA) are compositionally biased toward basic and acidic residues. The segment covering 791–801 (ERRRAKDRRRG) has biased composition (basic residues). Position 802 is a phosphothreonine (T802). The segment covering 818–830 (EEVKEALHERLSR) has biased composition (basic and acidic residues). S833 is subject to Phosphoserine. The span at 844-860 (YSDRASARARREAREAR) shows a compositional bias: basic and acidic residues. S941 carries the phosphoserine modification.

PP1 comprises a catalytic subunit, PPP1CA, PPP1CB or PPP1CC, and one or several targeting or regulatory subunits. PPP1R12B mediates binding to myosin. Isoform 3 and isoform 4 bind PPP1R12A, but not isoform 1 of PPP1R12B itself. Binds IL16.

Its subcellular location is the cytoplasm. It localises to the cytoskeleton. The protein localises to the stress fiber. Regulates myosin phosphatase activity. Augments Ca(2+) sensitivity of the contractile apparatus. The chain is Protein phosphatase 1 regulatory subunit 12B (Ppp1r12b) from Mus musculus (Mouse).